Consider the following 142-residue polypeptide: uncharacterized protein (142 aa).

The 141-residue stretch at 2–142 (IHMKQLTSKE…IESYLFRKPV (141 aa)) folds into the N-acetyltransferase domain.

Belongs to the acetyltransferase family.

This is an uncharacterized protein from Bacillus subtilis (strain 168).